A 142-amino-acid chain; its full sequence is FAD synthase (142 aa).

ATP-binding positions include 9–10 (VF), 14–17 (HLGH), Asp93, and Tyr120.

It belongs to the archaeal FAD synthase family. As to quaternary structure, homodimer. It depends on a divalent metal cation as a cofactor.

The catalysed reaction is FMN + ATP + H(+) = FAD + diphosphate. The protein operates within cofactor biosynthesis; FAD biosynthesis; FAD from FMN: step 1/1. In terms of biological role, catalyzes the transfer of the AMP portion of ATP to flavin mononucleotide (FMN) to produce flavin adenine dinucleotide (FAD) coenzyme. This chain is FAD synthase, found in Thermoplasma acidophilum (strain ATCC 25905 / DSM 1728 / JCM 9062 / NBRC 15155 / AMRC-C165).